Here is a 516-residue protein sequence, read N- to C-terminus: Tyrosine decarboxylase 3 (516 aa).

Residue K319 is modified to N6-(pyridoxal phosphate)lysine.

Belongs to the group II decarboxylase family. In terms of assembly, homodimer. The cofactor is pyridoxal 5'-phosphate.

It catalyses the reaction L-tyrosine + H(+) = tyramine + CO2. The sequence is that of Tyrosine decarboxylase 3 (TYRDC-3) from Petroselinum crispum (Parsley).